A 513-amino-acid chain; its full sequence is ATP synthase subunit alpha (513 aa).

Residue 169-176 (GDRQTGKT) participates in ATP binding.

This sequence belongs to the ATPase alpha/beta chains family. In terms of assembly, F-type ATPases have 2 components, CF(1) - the catalytic core - and CF(0) - the membrane proton channel. CF(1) has five subunits: alpha(3), beta(3), gamma(1), delta(1), epsilon(1). CF(0) has three main subunits: a(1), b(2) and c(9-12). The alpha and beta chains form an alternating ring which encloses part of the gamma chain. CF(1) is attached to CF(0) by a central stalk formed by the gamma and epsilon chains, while a peripheral stalk is formed by the delta and b chains.

The protein resides in the cell inner membrane. It catalyses the reaction ATP + H2O + 4 H(+)(in) = ADP + phosphate + 5 H(+)(out). Functionally, produces ATP from ADP in the presence of a proton gradient across the membrane. The alpha chain is a regulatory subunit. This chain is ATP synthase subunit alpha, found in Cronobacter sakazakii (strain ATCC BAA-894) (Enterobacter sakazakii).